Here is an 823-residue protein sequence, read N- to C-terminus: Putative ankyrin repeat domain-containing protein 20A4 (823 aa).

ANK repeat units lie at residues 66–95 (QHRT…QIDV), 99–128 (ENRT…NPNL), 132–161 (YGNT…HIEA), 165–194 (DNNT…SSHA), and 198–227 (LRRS…DVFA). Disordered regions lie at residues 301 to 343 (VPEK…EVED) and 356 to 405 (QTLR…NICD). A compositionally biased stretch (basic and acidic residues) spans 371-384 (EQQRHERSEKKQPQ). 3 coiled-coil regions span residues 431–480 (KKLK…KQLE), 565–724 (EMIT…NNST), and 776–806 (FVLE…KTEV).

This Homo sapiens (Human) protein is Putative ankyrin repeat domain-containing protein 20A4.